The primary structure comprises 326 residues: Septum site-determining protein minD homolog, chloroplastic (326 aa).

The N-terminal 62 residues, 1–62 (MASLRLFSTN…LAGETPRIVV (62 aa)), are a transit peptide targeting the chloroplast. ATP is bound at residue 67-74 (KGGVGKTT).

This sequence belongs to the ParA family. MinD subfamily. In terms of assembly, homodimer. Interacts with MINE1. Binds to ARC3. Interacts with MCD1. Interacts with CDP1/PARC6.

The protein resides in the plastid. It is found in the chloroplast inner membrane. Its activity is regulated as follows. Stimulated ATPase activity by MINE1. In terms of biological role, together with ARC3 and MCD1, regulates FtsZ ring positioning in chloroplasts in an ARC6-dependent manner. Calcium-dependent ATPase required for the correct placement of the plastid division site. Inhibits FtsZ filament and ring formation in the plastid. Mediates inhibition of plastid division. In cooperation with MINE1, prevents FtsZ ring formation anywhere outside of the mid-plastids. The chain is Septum site-determining protein minD homolog, chloroplastic from Arabidopsis thaliana (Mouse-ear cress).